The sequence spans 829 residues: Cadherin-3 (829 aa).

The signal sequence occupies residues Met-1 to Ser-24. The propeptide occupies Glu-25–Arg-107. Cadherin domains lie at Asp-108 to Phe-215, Thr-216 to Phe-328, Asp-329 to Phe-440, Val-441 to Pro-546, and Val-547 to Pro-650. Over Asp-108–Gly-654 the chain is Extracellular. A glycan (N-linked (GlcNAc...) asparagine) is linked at Asn-200. A glycan (N-linked (GlcNAc...) asparagine) is linked at Asn-566. Residues Phe-655–Val-677 form a helical membrane-spanning segment. The Cytoplasmic segment spans residues Arg-678–Asp-829.

In terms of assembly, interacts with CDCP1 and CTNNB1. Expressed in some normal epithelial tissues and in some carcinoma cell lines.

Its subcellular location is the cell membrane. Its function is as follows. Cadherins are calcium-dependent cell adhesion proteins. They preferentially interact with themselves in a homophilic manner in connecting cells; cadherins may thus contribute to the sorting of heterogeneous cell types. This is Cadherin-3 (CDH3) from Homo sapiens (Human).